We begin with the raw amino-acid sequence, 529 residues long: Bifunctional purine biosynthesis protein PurH (529 aa).

Residues 3–149 form the MGS-like domain; that stretch reads DRIPLKRALI…KNHAFVTVVV (147 aa).

This sequence belongs to the PurH family.

The enzyme catalyses (6R)-10-formyltetrahydrofolate + 5-amino-1-(5-phospho-beta-D-ribosyl)imidazole-4-carboxamide = 5-formamido-1-(5-phospho-D-ribosyl)imidazole-4-carboxamide + (6S)-5,6,7,8-tetrahydrofolate. It carries out the reaction IMP + H2O = 5-formamido-1-(5-phospho-D-ribosyl)imidazole-4-carboxamide. It participates in purine metabolism; IMP biosynthesis via de novo pathway; 5-formamido-1-(5-phospho-D-ribosyl)imidazole-4-carboxamide from 5-amino-1-(5-phospho-D-ribosyl)imidazole-4-carboxamide (10-formyl THF route): step 1/1. Its pathway is purine metabolism; IMP biosynthesis via de novo pathway; IMP from 5-formamido-1-(5-phospho-D-ribosyl)imidazole-4-carboxamide: step 1/1. In Paracoccus denitrificans (strain Pd 1222), this protein is Bifunctional purine biosynthesis protein PurH.